The following is a 382-amino-acid chain: Galactokinase (382 aa).

34–37 serves as a coordination point for substrate; that stretch reads EHTD. ATP is bound at residue 124 to 130; the sequence is GAGLSSS. The Mg(2+) site is built by Ser-130 and Glu-162. Asp-174 functions as the Proton acceptor in the catalytic mechanism. Position 223 (Tyr-223) interacts with substrate.

This sequence belongs to the GHMP kinase family. GalK subfamily.

It localises to the cytoplasm. It carries out the reaction alpha-D-galactose + ATP = alpha-D-galactose 1-phosphate + ADP + H(+). Its pathway is carbohydrate metabolism; galactose metabolism. Functionally, catalyzes the transfer of the gamma-phosphate of ATP to D-galactose to form alpha-D-galactose-1-phosphate (Gal-1-P). This Escherichia coli (strain SMS-3-5 / SECEC) protein is Galactokinase.